The following is a 366-amino-acid chain: Galactoside alpha-(1,2)-fucosyltransferase 1 (366 aa).

The Cytoplasmic segment spans residues 1-8 (MWPLSHRH). The chain crosses the membrane as a helical; Signal-anchor for type II membrane protein span at residues 9–25 (LCLAFLLVCVLSAISFF). Over 26–366 (LHVHQDSFRH…LSPLWTLAEP (341 aa)) the chain is Lumenal. N-linked (GlcNAc...) asparagine glycosylation is found at N66, N302, and N328.

The protein belongs to the glycosyltransferase 11 family.

It localises to the golgi apparatus. Its subcellular location is the golgi stack membrane. It carries out the reaction a beta-D-galactosyl-(1-&gt;4)-N-acetyl-beta-D-glucosaminyl derivative + GDP-beta-L-fucose = an alpha-L-Fuc-(1-&gt;2)-beta-D-Gal-(1-&gt;4)-beta-D-GlcNAc derivative + GDP + H(+). The catalysed reaction is a ganglioside GA1 + GDP-beta-L-fucose = a ganglioside Fuc-GA1 + GDP + H(+). It catalyses the reaction a beta-D-Gal-(1-&gt;3)-beta-D-GlcNAc-(1-&gt;3)-beta-D-Gal-(1-&gt;4)-beta-D-Glc-(1&lt;-&gt;1')-Cer(d18:1(4E)) + GDP-beta-L-fucose = alpha-L-fucosyl-(1-&gt;2)- beta-D-galactosyl-(1-&gt;3)-N-acetyl-beta-D-glucosaminyl-(1-&gt;3)-beta-D-galactosyl-(1-&gt;4)-beta-D-glucosyl-(1&lt;-&gt;1')-N-acylsphing-4-enine + GDP + H(+). The enzyme catalyses a neolactoside nLc4Cer(d18:1(4E)) + GDP-beta-L-fucose = a neolactoside IV(2)-alpha-Fuc-nLc4Cer(d18:1(4E)) + GDP + H(+). It carries out the reaction a ganglioside GM1 + GDP-beta-L-fucose = a ganglioside Fuc-GM1 + GDP + H(+). The catalysed reaction is beta-D-galactosyl-(1-&gt;3)-N-acetyl-D-galactosamine + GDP-beta-L-fucose = alpha-L-fucosyl-(1-&gt;2)-beta-D-galactosyl-(1-&gt;3)-N-acetyl-D-galactosamine + GDP + H(+). The protein operates within protein modification; protein glycosylation. Functionally, catalyzes the transfer of L-fucose, from a guanosine diphosphate-beta-L-fucose, to the terminal galactose residue of glycoconjugates through an alpha(1,2) linkage leading to H antigen synthesis that is an intermediate substrate in the synthesis of ABO blood group antigens. H antigen is essential for maturation of the glomerular layer of the main olfactory bulb, in cell migration and early cell-cell contacts during tumor associated angiogenesis. Preferentially fucosylates soluble lactose and to a lesser extent fucosylates glycolipids gangliosides GA1 and GM1a. The protein is Galactoside alpha-(1,2)-fucosyltransferase 1 of Alouatta caraya (Black howler monkey).